We begin with the raw amino-acid sequence, 455 residues long: 1-deoxy-D-xylulose 5-phosphate reductoisomerase (455 aa).

Residues threonine 30, glycine 31, serine 32, isoleucine 33, glutamine 63, and asparagine 159 each coordinate NADPH. Lysine 160 serves as a coordination point for 1-deoxy-D-xylulose 5-phosphate. Glutamate 161 contacts NADPH. Aspartate 185 lines the Mn(2+) pocket. 1-deoxy-D-xylulose 5-phosphate is bound by residues serine 186 and glutamate 187. Position 187 (glutamate 187) interacts with Mn(2+). Residues 205–214 (YATAKQSIQP) are compositionally biased toward polar residues. Positions 205–233 (YATAKQSIQPESVRATDPPSSTTDSPAKT) are disordered. 2 residues coordinate 1-deoxy-D-xylulose 5-phosphate: serine 246 and histidine 269. Glycine 275 serves as a coordination point for NADPH. Residues serine 282, asparagine 287, lysine 288, and glutamate 291 each contribute to the 1-deoxy-D-xylulose 5-phosphate site. Mn(2+) is bound at residue glutamate 291.

Belongs to the DXR family. Requires Mg(2+) as cofactor. It depends on Mn(2+) as a cofactor.

The enzyme catalyses 2-C-methyl-D-erythritol 4-phosphate + NADP(+) = 1-deoxy-D-xylulose 5-phosphate + NADPH + H(+). The protein operates within isoprenoid biosynthesis; isopentenyl diphosphate biosynthesis via DXP pathway; isopentenyl diphosphate from 1-deoxy-D-xylulose 5-phosphate: step 1/6. In terms of biological role, catalyzes the NADPH-dependent rearrangement and reduction of 1-deoxy-D-xylulose-5-phosphate (DXP) to 2-C-methyl-D-erythritol 4-phosphate (MEP). The protein is 1-deoxy-D-xylulose 5-phosphate reductoisomerase of Rhodopirellula baltica (strain DSM 10527 / NCIMB 13988 / SH1).